Here is a 136-residue protein sequence, read N- to C-terminus: Histone H3.1/H3.2 (136 aa).

The interval 1 to 42 (MARTKQTARKSTGGKAPRKQLASKAARKAAPATGGVKKPHRY) is disordered. Lysine 5 is modified (N6,N6,N6-trimethyllysine; alternate). At lysine 5 the chain carries N6,N6-dimethyllysine; alternate. 2 positions are modified to N6-methyllysine; alternate: lysine 5 and lysine 10. Residue lysine 10 is modified to N6-acetyllysine; alternate. Serine 11 is modified (phosphoserine). At lysine 15 the chain carries N6,N6-dimethyllysine; alternate. Lysine 15, lysine 19, lysine 24, lysine 28, and lysine 37 each carry N6-acetyllysine; alternate. Residues lysine 19, lysine 24, lysine 28, and lysine 37 each carry the N6-methyllysine; alternate modification. Low complexity predominate over residues 19-32 (KQLASKAARKAAPA). N6,N6,N6-trimethyllysine; alternate is present on residues lysine 28 and lysine 37. An N6,N6-dimethyllysine; alternate mark is found at lysine 28 and lysine 37. An N6-acetyllysine mark is found at lysine 57 and lysine 65. Position 80 is an N6,N6,N6-trimethyllysine; alternate (lysine 80). An N6,N6-dimethyllysine; alternate modification is found at lysine 80. Lysine 80 is modified (N6-methyllysine; alternate).

The protein belongs to the histone H3 family. The nucleosome is a histone octamer containing two molecules each of H2A, H2B, H3 and H4 assembled in one H3-H4 heterotetramer and two H2A-H2B heterodimers. The octamer wraps approximately 147 bp of DNA. In terms of processing, phosphorylated by ark1 to form H3S10ph in a cell cycle-dependent manner during mitosis and meiosis. H3S10ph is also formed by ssp2, promotes subsequent H3K14ac formation by gcn5, and is required for transcriptional activation through TBP recruitment to the promoters. Dephosphorylation is performed by sds21. Mono-, di- and trimethylated by the COMPASS complex to form H3K4me1/2/3. H3K4me activates gene expression by regulating transcription elongation and plays a role in telomere length maintenance. H3K4me enrichment correlates with transcription levels, and occurs in a 5' to 3' gradient with H3K4me3 enrichment at the 5'-end of genes, shifting to H3K4me2 and then H3K4me1. Methylated by clr4 to form H3K9me1. H3K9me1 represents a specific tag for epigenetic transcriptional repression by recruiting swi6/HP1 to methylated histones. Targeting to histone probably involves clr3 and rik1. Essential for silencing of centromeres and directional switching of the mating type. Methylated by set2 to form H3K36me. H3K36me represses gene expression. Methylated by dot1 to form H3K79me. H3K79me is required for association of SIR proteins with telomeric regions and for telomeric silencing. The COMPASS-mediated formation of H3K4me2/3 and the dot1-mediated formation of H3K79me require H2BK123ub1. Post-translationally, acetylation of histone H3 leads to transcriptional activation. H3K14ac formation by gcn5 is promoted by H3S10ph. H3K14ac can also be formed by esa1. H3K56ac formation occurs predominantly in newly synthesized H3 molecules during G1, S and G2/M of the cell cycle and may be involved in DNA repair.

It localises to the nucleus. The protein resides in the chromosome. In terms of biological role, core component of nucleosome. Nucleosomes wrap and compact DNA into chromatin, limiting DNA accessibility to the cellular machineries which require DNA as a template. Histones thereby play a central role in transcription regulation, DNA repair, DNA replication and chromosomal stability. DNA accessibility is regulated via a complex set of post-translational modifications of histones, also called histone code, and nucleosome remodeling. The polypeptide is Histone H3.1/H3.2 (hht1) (Schizosaccharomyces pombe (strain 972 / ATCC 24843) (Fission yeast)).